The chain runs to 118 residues: Altered inheritance of mitochondria protein 26, mitochondrial (118 aa).

The next 3 membrane-spanning stretches (helical) occupy residues 7–27, 41–61, and 98–118; these read EHLL…AYFF, LAVT…SIPA, and FLFC…GLSI.

The protein localises to the mitochondrion membrane. Involved in selective mitochondria autophagy (mitophagy). The sequence is that of Altered inheritance of mitochondria protein 26, mitochondrial (AIM26) from Saccharomyces cerevisiae (strain ATCC 204508 / S288c) (Baker's yeast).